A 1249-amino-acid polypeptide reads, in one-letter code: LRR receptor-like serine/threonine-protein kinase GSO1 (1249 aa).

Positions 1–18 (MQPLVLLLLFILCFSGLG) are cleaved as a signal peptide. The Extracellular segment spans residues 19-876 (QPGIINNDLQ…QQGLSARSVV (858 aa)). N-linked (GlcNAc...) asparagine glycans are attached at residues asparagine 77 and asparagine 117. LRR repeat units follow at residues 94–118 (FDNL…LSNL), 119–142 (TSLE…LGSL), 144–166 (NIRS…LGNL), 168–190 (NLQM…LGRL), 191–214 (VRVQ…LGNC), 216–238 (DLTV…LGRL), 239–262 (ENLE…LGEM), 264–285 (QLQY…SLAD), 286–310 (LGNL…FWNM), 312–334 (QLLD…ICSN), 336–359 (TNLE…LSKC), 360–383 (QSLK…LFEL), 385–407 (ELTD…ISNL), 408–431 (TNLQ…ISAL), 433–455 (KLEV…IGNC), 457–479 (SLKM…IGRL), 480–503 (KELN…LGNC), 505–527 (QLNI…FGFL), 528–551 (KGLE…LISL), 553–574 (NLTR…LCGS), 576–598 (SYLS…LGNS), 599–622 (QNLD…LGKI), 623–646 (RELS…LVLC), 648–670 (KLTH…LGKL), 671–694 (SQLG…LFNC), 696–718 (KLLV…IGNL), 719–742 (GALN…MGKL), 744–766 (KLYE…IGQL), 767–791 (QDLQ…IGTL), 792–815 (SKLE…VGDM), and 817–838 (SLGY…QFSR). N-linked (GlcNAc...) asparagine glycosylation is found at asparagine 213, asparagine 228, and asparagine 248. Asparagine 298, asparagine 309, and asparagine 334 each carry an N-linked (GlcNAc...) asparagine glycan. Asparagine 369, asparagine 393, and asparagine 406 each carry an N-linked (GlcNAc...) asparagine glycan. N-linked (GlcNAc...) asparagine glycosylation occurs at asparagine 454. 4 N-linked (GlcNAc...) asparagine glycosylation sites follow: asparagine 537, asparagine 553, asparagine 558, and asparagine 565. Asparagine 693 and asparagine 708 each carry an N-linked (GlcNAc...) asparagine glycan. An N-linked (GlcNAc...) asparagine glycan is attached at asparagine 779. Asparagine 822 is a glycosylation site (N-linked (GlcNAc...) asparagine). Residues 877–897 (IISAISALTAIGLMILVIALF) form a helical membrane-spanning segment. Residues 898-1249 (FKQRHDFFKK…NNRTAGYKKL (352 aa)) lie on the Cytoplasmic side of the membrane. Threonine 948 carries the phosphothreonine modification. A Protein kinase domain is found at 951-1240 (LSEEFMIGSG…ACDSLLHVYN (290 aa)). ATP is bound by residues 957–965 (IGSGGSGKV) and lysine 979. Phosphotyrosine is present on residues tyrosine 1027 and tyrosine 1071. Aspartate 1084 serves as the catalytic Proton acceptor. A phosphotyrosine mark is found at tyrosine 1129 and tyrosine 1136.

This sequence belongs to the protein kinase superfamily. Ser/Thr protein kinase family. In terms of assembly, interacts with CIF1 and CIF2. As to expression, mostly expressed in siliques, seeds, developing embryos and seedlings, detected in flower buds and roots, but not in leaves or stems.

The protein localises to the cell membrane. It carries out the reaction L-seryl-[protein] + ATP = O-phospho-L-seryl-[protein] + ADP + H(+). It catalyses the reaction L-threonyl-[protein] + ATP = O-phospho-L-threonyl-[protein] + ADP + H(+). In terms of biological role, together with GSO2, receptor-like serine/threonine-kinase required during the development of the epidermal surface in embryos and cotyledons. In coordination with GSO2, regulates root growth through control of cell division and cell fate specification. Controls seedling root growth by modulating sucrose response after germination. Receptor of the peptide hormones CIF1 and CIF2 required for contiguous Casparian strip diffusion barrier formation in roots. Required for localizing CASP proteins into the Casparian strip following an uninterrupted, ring-like domain, to trigger endodermal differentiation and thus regulate potassium ion (K) homeostasis. Involved in the maintenance of water transport and root pressure. May also be involved in the regulation of suberin accumulation in the endodermis. The polypeptide is LRR receptor-like serine/threonine-protein kinase GSO1 (Arabidopsis thaliana (Mouse-ear cress)).